The following is a 205-amino-acid chain: MDHAPERFDATPPAGEPDRPALGVLELTSIARGITVADAALKRAPSLLLMSRPVSSGKHLLMMRGQVAEVEESMIAAREIAGAGSGALLDELELPYAHEQLWRFLDAPVVADAWEEDTESVIIVETATVCAAIDSADAALKTAPVVLRDMRLAIGIAGKAFFTLTGELADVEAAAEVVRERCGARLLELACIARPVDELRGRLFF.

Residues 1–20 (MDHAPERFDATPPAGEPDRP) form a disordered region. BMC domains follow at residues 21-106 (ALGV…RFLD) and 120-204 (SVII…GRLF).

The protein belongs to the bacterial microcompartments protein family. Homotrimerizes to form a pseudohexamer. Unlike its paralogs BMC-T2 and BMC-T3, the pseudohexamers do not stack. The concave side faces outward, with the N- and C-terminii exposed to the cytoplasm.

The protein resides in the bacterial microcompartment. In terms of biological role, a minor component of the bacterial microcompartment (BMC) shell. Expression of 5 proteins in E.coli (BMC-H (Hoch_5815), BMC-P (Hoch_5814), and 3 BMC-T (Hoch_5812, Hoch_5816, Hoch_3341)) forms 40 nm artificial BMCs with a molecular mass of 6.5 MDa. This protein does not form stacked pseudohexamers in the BMC. There are 20 BMC-T pseudohexamers per BMC, composed of mixed BMC-T1, BMC-T2 and BMC-T3. The shell facets are 20-30 Angstroms thick, with 1 of BMC-T trimers protruding to the exterior. The polypeptide is Bacterial microcompartment protein trimer-1 (Haliangium ochraceum (strain DSM 14365 / JCM 11303 / SMP-2)).